The sequence spans 341 residues: Homeobox protein knotted-1-like 8 (341 aa).

The segment covering 1–17 (MESFASLAGGGSSSTTA) has biased composition (low complexity). Disordered stretches follow at residues 1–72 (MESF…AVQG), 121–148 (AAQQLDEADGHPRRRHEPQRDDDPDQLD), and 187–207 (AESNCEGTGSSEEEQDPSDKQ). Polar residues predominate over residues 187–196 (AESNCEGTGS). Residues 207–227 (QLKHQLLRKYGGSLGDLRQVF) form the ELK domain. A DNA-binding region (homeobox; TALE-type) is located at residues 228–291 (SKRTKKGKLP…NQRKRHWKPT (64 aa)).

It belongs to the TALE/KNOX homeobox family.

Its subcellular location is the nucleus. Its function is as follows. Probable transcription factor that may be involved in shoot formation during embryogenesis. This chain is Homeobox protein knotted-1-like 8 (OSH43), found in Oryza sativa subsp. japonica (Rice).